Reading from the N-terminus, the 376-residue chain is Putative cytosolic 5'-nucleotidase 3 (376 aa).

The Nucleophile role is filled by Asp-119. Residues Asp-119 and Asp-121 each contribute to the Mg(2+) site. Asp-121 acts as the Proton donor in catalysis. Substrate is bound by residues Glu-168, Ser-189, 236 to 237, and Lys-286; that span reads SA. Asp-312 is a binding site for Mg(2+).

It belongs to the pyrimidine 5'-nucleotidase family.

The protein localises to the cytoplasm. The catalysed reaction is a ribonucleoside 5'-phosphate + H2O = a ribonucleoside + phosphate. This Caenorhabditis elegans protein is Putative cytosolic 5'-nucleotidase 3.